We begin with the raw amino-acid sequence, 366 residues long: Anhydro-N-acetylmuramic acid kinase (366 aa).

Residue 12–19 coordinates ATP; it reads GTSLDGID.

It belongs to the anhydro-N-acetylmuramic acid kinase family.

The enzyme catalyses 1,6-anhydro-N-acetyl-beta-muramate + ATP + H2O = N-acetyl-D-muramate 6-phosphate + ADP + H(+). Its pathway is amino-sugar metabolism; 1,6-anhydro-N-acetylmuramate degradation. It participates in cell wall biogenesis; peptidoglycan recycling. Catalyzes the specific phosphorylation of 1,6-anhydro-N-acetylmuramic acid (anhMurNAc) with the simultaneous cleavage of the 1,6-anhydro ring, generating MurNAc-6-P. Is required for the utilization of anhMurNAc either imported from the medium or derived from its own cell wall murein, and thus plays a role in cell wall recycling. The sequence is that of Anhydro-N-acetylmuramic acid kinase from Nitrosospira multiformis (strain ATCC 25196 / NCIMB 11849 / C 71).